A 73-amino-acid chain; its full sequence is U-scoloptoxin(15)-Sm2a (73 aa).

Residues 1–20 (MKFYIVFCLFVVLLINFAAA) form the signal peptide. Disulfide bonds link cysteine 39-cysteine 66 and cysteine 43-cysteine 68.

It belongs to the scoloptoxin-15 family. As to expression, expressed by the venom gland.

It localises to the secreted. Functionally, activity unknown, even that a lot of targets (Kv, Nav, Cav) have been tested and activities on insects and mice have been tested. This chain is U-scoloptoxin(15)-Sm2a, found in Scolopendra morsitans (Tanzanian blue ringleg centipede).